Consider the following 212-residue polypeptide: Proteasome subunit beta type-2 (212 aa).

This sequence belongs to the peptidase T1B family. In terms of assembly, the 26S proteasome consists of a 20S proteasome core and two 19S regulatory subunits. The 20S proteasome core is composed of 28 subunits that are arranged in four stacked rings, resulting in a barrel-shaped structure. The two end rings are each formed by seven alpha subunits, and the two central rings are each formed by seven beta subunits. The catalytic chamber with the active sites is on the inside of the barrel.

Its subcellular location is the cytoplasm. It is found in the nucleus. Non-catalytic component of the proteasome, a multicatalytic proteinase complex which is characterized by its ability to cleave peptides with Arg, Phe, Tyr, Leu, and Glu adjacent to the leaving group at neutral or slightly basic pH. The proteasome has an ATP-dependent proteolytic activity. This Oryza sativa subsp. japonica (Rice) protein is Proteasome subunit beta type-2 (PBD1).